Reading from the N-terminus, the 246-residue chain is Uridylate kinase (246 aa).

11–14 (KISG) is a binding site for ATP. G53 provides a ligand contact to UMP. Residues G54 and R58 each coordinate ATP. UMP contacts are provided by residues D74 and 135 to 142 (TGSPYLTT). ATP is bound by residues T162, Y169, and D172.

It belongs to the UMP kinase family. As to quaternary structure, homohexamer.

The protein localises to the cytoplasm. The catalysed reaction is UMP + ATP = UDP + ADP. Its pathway is pyrimidine metabolism; CTP biosynthesis via de novo pathway; UDP from UMP (UMPK route): step 1/1. With respect to regulation, inhibited by UTP. In terms of biological role, catalyzes the reversible phosphorylation of UMP to UDP. In Chlamydia abortus (strain DSM 27085 / S26/3) (Chlamydophila abortus), this protein is Uridylate kinase.